The following is a 163-amino-acid chain: SsrA-binding protein (163 aa).

Residues 135–156 (GKKEHDKRDDTKEREWKIEKSR) are compositionally biased toward basic and acidic residues. Positions 135–163 (GKKEHDKRDDTKEREWKIEKSRTMKHAAR) are disordered.

The protein belongs to the SmpB family.

It localises to the cytoplasm. Functionally, required for rescue of stalled ribosomes mediated by trans-translation. Binds to transfer-messenger RNA (tmRNA), required for stable association of tmRNA with ribosomes. tmRNA and SmpB together mimic tRNA shape, replacing the anticodon stem-loop with SmpB. tmRNA is encoded by the ssrA gene; the 2 termini fold to resemble tRNA(Ala) and it encodes a 'tag peptide', a short internal open reading frame. During trans-translation Ala-aminoacylated tmRNA acts like a tRNA, entering the A-site of stalled ribosomes, displacing the stalled mRNA. The ribosome then switches to translate the ORF on the tmRNA; the nascent peptide is terminated with the 'tag peptide' encoded by the tmRNA and targeted for degradation. The ribosome is freed to recommence translation, which seems to be the essential function of trans-translation. This chain is SsrA-binding protein, found in Shewanella loihica (strain ATCC BAA-1088 / PV-4).